A 285-amino-acid chain; its full sequence is Hsp90 co-chaperone Cdc37-like 1 (285 aa).

The segment at 34–54 (LHNSESMDQEQAMAQAELSEL) is disordered. Residues 35–73 (HNSESMDQEQAMAQAELSELQRSEEEWRRKEAALSQGEN) are a coiled coil.

It belongs to the CDC37 family. As to quaternary structure, forms complexes with Hsp70 and Hsp90.

The protein localises to the cytoplasm. In terms of biological role, co-chaperone that binds to numerous proteins and promotes their interaction with Hsp70 and Hsp90. The protein is Hsp90 co-chaperone Cdc37-like 1 (cdc37l1) of Xenopus tropicalis (Western clawed frog).